Reading from the N-terminus, the 658-residue chain is Exoribonuclease 2 (658 aa).

Residues 189-530 (REDLTSLYFT…VNHRLIKQVL (342 aa)) form the RNB domain. The region spanning 576-658 (AVEFDCEIAD…ETRSIVGNII (83 aa)) is the S1 motif domain.

It belongs to the RNR ribonuclease family. RNase II subfamily.

The protein localises to the cytoplasm. It carries out the reaction Exonucleolytic cleavage in the 3'- to 5'-direction to yield nucleoside 5'-phosphates.. In terms of biological role, involved in mRNA degradation. Hydrolyzes single-stranded polyribonucleotides processively in the 3' to 5' direction. This Actinobacillus pleuropneumoniae serotype 7 (strain AP76) protein is Exoribonuclease 2.